A 238-amino-acid polypeptide reads, in one-letter code: Octanoyltransferase (238 aa).

The BPL/LPL catalytic domain occupies 44-224 (AGGPDSLLLL…AVLDALDGRI (181 aa)). Residues 82-89 (RGGKITWH), 154-156 (AIG), and 167-169 (GFA) contribute to the substrate site. Cysteine 185 serves as the catalytic Acyl-thioester intermediate.

It belongs to the LipB family.

It localises to the cytoplasm. The enzyme catalyses octanoyl-[ACP] + L-lysyl-[protein] = N(6)-octanoyl-L-lysyl-[protein] + holo-[ACP] + H(+). The protein operates within protein modification; protein lipoylation via endogenous pathway; protein N(6)-(lipoyl)lysine from octanoyl-[acyl-carrier-protein]: step 1/2. Functionally, catalyzes the transfer of endogenously produced octanoic acid from octanoyl-acyl-carrier-protein onto the lipoyl domains of lipoate-dependent enzymes. Lipoyl-ACP can also act as a substrate although octanoyl-ACP is likely to be the physiological substrate. This Mycolicibacterium gilvum (strain PYR-GCK) (Mycobacterium gilvum (strain PYR-GCK)) protein is Octanoyltransferase.